A 325-amino-acid polypeptide reads, in one-letter code: NADH-quinone oxidoreductase subunit H (325 aa).

8 helical membrane-spanning segments follow: residues 11–31, 81–101, 114–134, 154–174, 186–206, 237–257, 265–285, and 304–324; these read ILISVLKAVVILLVVVTCGAF, AIFTLAPVIAFTSLLLSFAIV, IGILFFLMMAGLAVYAVLFAG, LSYEVFLGLSLMGVVAQAGSF, VWNVIPQFFGFLTFAIAGVAV, FFVGEYIGIVTVSALIVTLFF, LPPFIWFALKTAFFMVMFILI, and VCLPLTLLNLLATAAVILYNA.

Belongs to the complex I subunit 1 family. In terms of assembly, NDH-1 is composed of 13 different subunits. Subunits NuoA, H, J, K, L, M, N constitute the membrane sector of the complex.

It localises to the cell inner membrane. It carries out the reaction a quinone + NADH + 5 H(+)(in) = a quinol + NAD(+) + 4 H(+)(out). NDH-1 shuttles electrons from NADH, via FMN and iron-sulfur (Fe-S) centers, to quinones in the respiratory chain. The immediate electron acceptor for the enzyme in this species is believed to be ubiquinone. Couples the redox reaction to proton translocation (for every two electrons transferred, four hydrogen ions are translocated across the cytoplasmic membrane), and thus conserves the redox energy in a proton gradient. This subunit may bind ubiquinone. This is NADH-quinone oxidoreductase subunit H from Yersinia pseudotuberculosis serotype O:1b (strain IP 31758).